Here is a 107-residue protein sequence, read N- to C-terminus: uncharacterized protein (107 aa).

The segment covering 80–98 has biased composition (polar residues); that stretch reads SIDNLKPTSHQNGTTNDTA. A disordered region spans residues 80 to 107; the sequence is SIDNLKPTSHQNGTTNDTATMDHLEKNE.

This is an uncharacterized protein from Human spumaretrovirus (SFVcpz(hu)).